Here is a 367-residue protein sequence, read N- to C-terminus: Probable butyrate kinase (367 aa).

This sequence belongs to the acetokinase family.

It localises to the cytoplasm. It carries out the reaction butanoate + ATP = butanoyl phosphate + ADP. The protein is Probable butyrate kinase of Exiguobacterium sibiricum (strain DSM 17290 / CCUG 55495 / CIP 109462 / JCM 13490 / 255-15).